The sequence spans 116 residues: Glycine-rich protein 3 short isoform (116 aa).

Residues 1–24 (MASKTLLLLGLFAFLFIVSEMAAA) form the signal peptide. The disordered stretch occupies residues 27 to 83 (VKSESEETVKPEQHGGGFGDNGGGRYQGGGGHGGHGGGGYQGGGGRYQGGGGRQGGG). Over residues 29–39 (SESEETVKPEQ) the composition is skewed to basic and acidic residues. Residues 40 to 83 (HGGGFGDNGGGRYQGGGGHGGHGGGGYQGGGGRYQGGGGRQGGG) show a composition bias toward gly residues. A run of 5 repeats spans residues 54-59 (GGGGHG), 62-67 (GGGGYQ), 68-73 (GGGGRY), 75-80 (GGGGRQ), and 81-86 (GGGGSY). Positions 54–86 (GGGGHGGHGGGGYQGGGGRYQGGGGRQGGGGSY) are 5 X 6 AA tandem repeats of G-G-G-G-[HYRS]-[GYQ].

This sequence belongs to the GRP family. In terms of assembly, interacts with WAK1 (via the extracellular domain). Component of a 500 kDa complex, composed of GRP3 or GRP3-S, WAK1 and KAPP.

The protein resides in the secreted. It localises to the extracellular space. Its subcellular location is the extracellular matrix. Its function is as follows. Regulates the function of the receptor protein kinase WAK1. This Arabidopsis thaliana (Mouse-ear cress) protein is Glycine-rich protein 3 short isoform (GRP3S).